The primary structure comprises 130 residues: Keratin, high-sulfur matrix protein, IIIA3A (130 aa).

As to expression, wool.

The keratin products of mammalian epidermal derivatives such as wool and hair consist of microfibrils embedded in a rigid matrix of other proteins. The matrix proteins include the high-sulfur and high-tyrosine keratins, having molecular weights of 6-20 kDa, whereas the microfibrils contain the larger, low-sulfur keratins (40-56 kDa). The polypeptide is Keratin, high-sulfur matrix protein, IIIA3A (Ovis aries (Sheep)).